Consider the following 257-residue polypeptide: ATP synthase delta chain, chloroplastic (257 aa).

The transit peptide at 1–70 directs the protein to the chloroplast; it reads MAALQNPVAL…PRGGALGTRM (70 aa).

It belongs to the ATPase delta chain family. As to quaternary structure, F-type ATPases have 2 components, CF(1) - the catalytic core - and CF(0) - the membrane proton channel. CF(1) has five subunits: alpha(3), beta(3), gamma(1), delta(1), epsilon(1). CF(0) has three main subunits: a, b and c.

It is found in the plastid. It localises to the chloroplast thylakoid membrane. Functionally, this protein seems to be part of the stalk that links CF(0) to CF(1). It either transmits conformational changes from CF(0) into CF(1) or is implicated in proton conduction. This chain is ATP synthase delta chain, chloroplastic (ATPD), found in Spinacia oleracea (Spinach).